A 237-amino-acid polypeptide reads, in one-letter code: Pyridoxine 5'-phosphate synthase (237 aa).

Positions 7 and 18 each coordinate 3-amino-2-oxopropyl phosphate. Catalysis depends on His-43, which acts as the Proton acceptor. Residues Arg-45 and His-50 each contribute to the 1-deoxy-D-xylulose 5-phosphate site. Glu-70 acts as the Proton acceptor in catalysis. Thr-100 contributes to the 1-deoxy-D-xylulose 5-phosphate binding site. Catalysis depends on His-190, which acts as the Proton donor. Residues Asp-191 and Gly-213–His-214 contribute to the 3-amino-2-oxopropyl phosphate site.

The protein belongs to the PNP synthase family. In terms of assembly, homooctamer; tetramer of dimers.

It is found in the cytoplasm. The catalysed reaction is 3-amino-2-oxopropyl phosphate + 1-deoxy-D-xylulose 5-phosphate = pyridoxine 5'-phosphate + phosphate + 2 H2O + H(+). Its pathway is cofactor biosynthesis; pyridoxine 5'-phosphate biosynthesis; pyridoxine 5'-phosphate from D-erythrose 4-phosphate: step 5/5. Its function is as follows. Catalyzes the complicated ring closure reaction between the two acyclic compounds 1-deoxy-D-xylulose-5-phosphate (DXP) and 3-amino-2-oxopropyl phosphate (1-amino-acetone-3-phosphate or AAP) to form pyridoxine 5'-phosphate (PNP) and inorganic phosphate. The chain is Pyridoxine 5'-phosphate synthase from Bacteroides thetaiotaomicron (strain ATCC 29148 / DSM 2079 / JCM 5827 / CCUG 10774 / NCTC 10582 / VPI-5482 / E50).